The chain runs to 351 residues: GDP-mannose 4,6-dehydratase (351 aa).

NADP(+) contacts are provided by residues 11-16 (GVTGQD), 66-67 (DM), 88-92 (LAAQS), and Tyr103. The active site involves Thr135. Residues Glu137 and Tyr159 each act as nucleophile in the active site. The NADP(+) site is built by Lys163, His189, and Arg194.

It belongs to the NAD(P)-dependent epimerase/dehydratase family. GDP-mannose 4,6-dehydratase subfamily. Requires NADP(+) as cofactor.

It catalyses the reaction GDP-alpha-D-mannose = GDP-4-dehydro-alpha-D-rhamnose + H2O. Its pathway is nucleotide-sugar biosynthesis; GDP-L-fucose biosynthesis via de novo pathway; GDP-L-fucose from GDP-alpha-D-mannose: step 1/2. Its function is as follows. Catalyzes the conversion of GDP-D-mannose to GDP-4-dehydro-6-deoxy-D-mannose. This chain is GDP-mannose 4,6-dehydratase, found in Sinorhizobium fredii (strain HH103).